A 1494-amino-acid polypeptide reads, in one-letter code: Ral GTPase-activating protein subunit beta (1494 aa).

Disordered stretches follow at residues 355 to 437 (PRSD…APRR) and 709 to 738 (ENNLKSHSRTNSGISSASGGSTEPTTPDSE). S359 bears the Phosphoserine mark. A phosphothreonine mark is found at T363 and T379. 3 stretches are compositionally biased toward polar residues: residues 369–381 (SMPQSAAVSTTPP), 392–428 (NKATMKTSTVSTAHASKVQHQTSSTSPLSSPNQTSSE), and 711–735 (NLKSHSRTNSGISSASGGSTEPTTP). Residues S421 and S720 each carry the phosphoserine modification. T734 is modified (phosphothreonine). The Rap-GAP domain occupies 1149-1392 (IGYLDLLPCR…TTLEKEVPVI (244 aa)). Phosphoserine is present on S1285. Residues 1312 to 1323 (NLNSSQRLSPSS) show a composition bias toward polar residues. Residues 1312–1335 (NLNSSQRLSPSSRMRKLPQGRPVP) are disordered.

In terms of assembly, component of the heterodimeric RalGAP1 complex with RALGAPA1 and of the heterodimeric RalGAP2 complex with RALGAPA2. Heterodimerization is required for activity. As to expression, highly expressed in brain, mostly in amygdala.

In terms of biological role, non-catalytic subunit of the heterodimeric RalGAP1 and RalGAP2 complexes which act as GTPase activators for the Ras-like small GTPases RALA and RALB. The chain is Ral GTPase-activating protein subunit beta (RALGAPB) from Homo sapiens (Human).